The primary structure comprises 185 residues: Probable chorismate pyruvate-lyase (185 aa).

Residues R75, L113, and E174 each coordinate substrate.

Belongs to the UbiC family.

It is found in the cytoplasm. The catalysed reaction is chorismate = 4-hydroxybenzoate + pyruvate. The protein operates within cofactor biosynthesis; ubiquinone biosynthesis. Functionally, removes the pyruvyl group from chorismate, with concomitant aromatization of the ring, to provide 4-hydroxybenzoate (4HB) for the ubiquinone pathway. This is Probable chorismate pyruvate-lyase from Aromatoleum aromaticum (strain DSM 19018 / LMG 30748 / EbN1) (Azoarcus sp. (strain EbN1)).